A 533-amino-acid chain; its full sequence is Lymphocyte cytosolic protein 2 (533 aa).

In terms of domain architecture, SAM spans 12–78 (VLAWNSDNLA…SQDINKNEER (67 aa)). Position 23 is a phosphotyrosine (Tyr23). Disordered regions lie at residues 78-359 (RRSI…PLAH) and 374-419 (SASL…TPLD). Over residues 94–144 (ETESHEEDDGGWSSFEDDYESPNDDDPDGEDDGDYESPNEEEQALVDDAAD) the composition is skewed to acidic residues. Polar residues predominate over residues 151–172 (NNEEALQSSILPPNSFHNTNSM). Residues 186–201 (PPVPPLRPKPALPPLP) are compositionally biased toward pro residues. Phosphoserine is present on residues Ser207 and Ser210. Positions 340-354 (NTFPSRSVQPSSKNT) are enriched in polar residues. Residues Ser376 and Ser410 each carry the phosphoserine modification. A compositionally biased stretch (pro residues) spans 400-411 (LPVPNRPQPPSP). The 109-residue stretch at 422-530 (WYVSYITRPE…RYQCTLTHAA (109 aa)) folds into the SH2 domain.

In terms of assembly, interacts with SLA. Interacts with CBLB. Interacts with GRB2. Interacts with SHB. Interacts with PRAM1. Interacts (via SH2 domain) with CD6 (via tyrosine phosphorylated C-terminus). Interacts with FYB1 and the phosphorylated form of FYB2. Interacts with 14-3-3 adapter/YWHAZ; this phosphorylation leads to YWHAZ proteolytic degradation. Interacts with VAV1; this interaction plays a role in TCR-mediated cytokine production. Interacts with AGER; this interaction plays an important role in AGER-mediated pro-inflammatory responses and cytokine release. In terms of processing, phosphorylated after T-cell receptor activation by ZAP70, ITK and TXK, which leads to the up-regulation of Th1 preferred cytokine IL-2. SYK-dependent phosphorylation is required for recruitment of PI3K signaling components. As to expression, highly expressed in spleen, thymus, and peripheral blood leukocytes.

It localises to the cytoplasm. Functionally, adapter protein primarily involved in signaling pathways within T-cells, as well as other immune cells such as platelets, mast cells, and natural killer (NK) cells. Plays a crucial role for transducing signal from the T-cell receptor (TCR) after antigen recognition leading to T-cell activation. Mechanistically, once phosphorylated by the kinase ZAP70, mediates interactions with the guanine-nucleotide exchange factor VAV1, the adapter protein NCK and the kinase ITK. In turn, stimulates the activation of PKC-theta/PRKCQ and NF-kappa-B transcriptional activity in response to CD3 and CD28 costimulation. Also plays an essential role in AGER-induced signaling pathways including p38 MAPK and ERK1/2 activation leading to cytokine release and pro-inflammatory responses. This is Lymphocyte cytosolic protein 2 (Lcp2) from Mus musculus (Mouse).